The chain runs to 457 residues: L-asparaginase-like protein GA18140 (457 aa).

Positions 1-20 (MRYLCRAQLLSLLLLPLLKA) are cleaved as a signal peptide. 3 disulfide bridges follow: Cys72/Cys78, Cys172/Cys188, and Cys327/Cys354.

This sequence belongs to the Ntn-hydrolase family.

The polypeptide is L-asparaginase-like protein GA18140 (Drosophila pseudoobscura pseudoobscura (Fruit fly)).